Consider the following 346-residue polypeptide: KH domain-containing, RNA-binding, signal transduction-associated protein 2 (346 aa).

The region spanning 65–131 is the KH domain; the sequence is LIPVQQYPKF…AKYAHLSNDL (67 aa). The tract at residues 175-291 is disordered; sequence LSYLNGSDDP…SYESYDDNYS (117 aa). Low complexity predominate over residues 195-224; that stretch reads LRLTSTASPRGRGSAAPPAPPGRGAAAPRG. Over residues 268–287 the composition is skewed to acidic residues; sequence YGYDDGYDGEYDDQSYESYD.

It belongs to the KHDRBS family.

The protein localises to the nucleus. In terms of biological role, RNA-binding protein that plays a role in the regulation of alternative splicing. The polypeptide is KH domain-containing, RNA-binding, signal transduction-associated protein 2 (khdrbs2) (Danio rerio (Zebrafish)).